Consider the following 324-residue polypeptide: GTP cyclohydrolase 1 (324 aa).

Disordered regions lie at residues 33–59 (GRNN…NQAE) and 79–119 (VPLA…TPGH). The span at 40-49 (STSSTSGTSS) shows a compositional bias: low complexity. Polar residues-rich tracts occupy residues 50–59 (LADRQQNQAE) and 93–117 (TNGS…STTP). Cysteine 214, histidine 217, and cysteine 285 together coordinate Zn(2+).

The protein belongs to the GTP cyclohydrolase I family. Toroid-shaped homodecamer, composed of two pentamers of five dimers. Isoform B is expressed almost exclusively in adult heads.

It catalyses the reaction GTP + H2O = 7,8-dihydroneopterin 3'-triphosphate + formate + H(+). It participates in cofactor biosynthesis; 7,8-dihydroneopterin triphosphate biosynthesis; 7,8-dihydroneopterin triphosphate from GTP: step 1/1. Functionally, isoform B is required for eye pigment production, Isoform C may be required for normal embryonic development and segment pattern formation. The chain is GTP cyclohydrolase 1 (Pu) from Drosophila melanogaster (Fruit fly).